The following is a 381-amino-acid chain: MPAVDPVRLTADLVRCASVTPADEGALDILHDVLSDAGFDCAWADRGGIRNLFARWGRKGHPKTFGFNGHTDVVPIGNADDWSMPPFGAEVKDGIMYGRGTTDMKSGVAAFAAAAVDFVRDTPPDGAIVLAITGDEEGDATDGTTALLAYMAAQGEQMSACLVGEPTCPDRMGEMIKIGRRGSMTAWITFIGKQGHAAYPHRACNPLPALMRLMDRLASHKLDEGTEFFDPSTLAIVTVDTGNPATNVIPASCSGTVNIRFNDAHSGASLTEWIKTELSRIEGEFGVQIDLRIKISGESFLTPPGPLSALVSKAVKAQTGIEPVLSTTGGTSDARFVKDHCPVVEFGLVGQSMHQVDEHVKTDHIVELKAIYSRILTDYFA.

A Zn(2+)-binding site is contributed by histidine 70. The active site involves aspartate 72. Aspartate 103 is a binding site for Zn(2+). The active-site Proton acceptor is the glutamate 136. Glutamate 137, glutamate 165, and histidine 354 together coordinate Zn(2+).

This sequence belongs to the peptidase M20A family. DapE subfamily. In terms of assembly, homodimer. Zn(2+) serves as cofactor. It depends on Co(2+) as a cofactor.

The enzyme catalyses N-succinyl-(2S,6S)-2,6-diaminopimelate + H2O = (2S,6S)-2,6-diaminopimelate + succinate. It participates in amino-acid biosynthesis; L-lysine biosynthesis via DAP pathway; LL-2,6-diaminopimelate from (S)-tetrahydrodipicolinate (succinylase route): step 3/3. Functionally, catalyzes the hydrolysis of N-succinyl-L,L-diaminopimelic acid (SDAP), forming succinate and LL-2,6-diaminopimelate (DAP), an intermediate involved in the bacterial biosynthesis of lysine and meso-diaminopimelic acid, an essential component of bacterial cell walls. The chain is Succinyl-diaminopimelate desuccinylase from Roseobacter denitrificans (strain ATCC 33942 / OCh 114) (Erythrobacter sp. (strain OCh 114)).